The following is a 1128-amino-acid chain: Mastermind-like protein 2 (1128 aa).

Disordered stretches follow at residues M1–L22 and Q81–R167. The segment covering G12–L22 has biased composition (gly residues). The segment covering P113–A122 has biased composition (low complexity). Position 177 is a phosphoserine (S177). Disordered stretches follow at residues F343–Q509, S521–P649, Q677–N714, Q758–T794, and G1039–D1073. 2 stretches are compositionally biased toward polar residues: residues L347–R357 and G374–P387. A compositionally biased stretch (low complexity) spans S395–A426. Over residues Q431 to R446 the composition is skewed to polar residues. Low complexity-rich tracts occupy residues H453–P473 and P484–S497. A compositionally biased stretch (polar residues) spans N566–P584. The span at T590–P649 shows a compositional bias: low complexity. Composition is skewed to polar residues over residues Q677–G695, N778–T794, and G1039–P1052.

It belongs to the mastermind family. As to quaternary structure, interacts through its N-terminal region with the ankyrin repeat region of the Notch proteins NOTCH1, NOTCH2, NOTCH3 and NOTCH4. Forms a DNA-binding complex with Notch proteins and RBPSUH/RBP-J kappa.

It is found in the nucleus speckle. Its function is as follows. Acts as a transcriptional coactivator for NOTCH proteins. Has been shown to amplify NOTCH-induced transcription of HES1. Potentiates activation by NOTCH3 and NOTCH4 more efficiently than MAML1 or MAML3. The polypeptide is Mastermind-like protein 2 (MAML2) (Bos taurus (Bovine)).